A 244-amino-acid chain; its full sequence is Uridylate kinase (244 aa).

18–21 (KISG) contacts ATP. Positions 26 to 31 (GDQGYG) are involved in allosteric activation by GTP. G60 contributes to the UMP binding site. G61 and R65 together coordinate ATP. Residues D80 and 141 to 148 (TGNPYFTT) contribute to the UMP site. ATP is bound by residues T168, Y174, and D177.

Belongs to the UMP kinase family. In terms of assembly, homohexamer.

The protein localises to the cytoplasm. The catalysed reaction is UMP + ATP = UDP + ADP. It participates in pyrimidine metabolism; CTP biosynthesis via de novo pathway; UDP from UMP (UMPK route): step 1/1. With respect to regulation, allosterically activated by GTP. Inhibited by UTP. Its function is as follows. Catalyzes the reversible phosphorylation of UMP to UDP. The protein is Uridylate kinase of Paracoccus denitrificans (strain Pd 1222).